A 226-amino-acid chain; its full sequence is 7-cyano-7-deazaguanine synthase (226 aa).

9–19 (YSGGLDSTTCL) lines the ATP pocket. Residues C189, C199, C202, and C205 each contribute to the Zn(2+) site.

It belongs to the QueC family. Zn(2+) is required as a cofactor.

It catalyses the reaction 7-carboxy-7-deazaguanine + NH4(+) + ATP = 7-cyano-7-deazaguanine + ADP + phosphate + H2O + H(+). The protein operates within purine metabolism; 7-cyano-7-deazaguanine biosynthesis. In terms of biological role, catalyzes the ATP-dependent conversion of 7-carboxy-7-deazaguanine (CDG) to 7-cyano-7-deazaguanine (preQ(0)). This chain is 7-cyano-7-deazaguanine synthase, found in Pelobacter propionicus (strain DSM 2379 / NBRC 103807 / OttBd1).